We begin with the raw amino-acid sequence, 488 residues long: Multidrug resistance outer membrane protein MdtP (488 aa).

The N-terminal stretch at 1-23 is a signal peptide; sequence MINRQLSRLLLCSILGSTTLISG. The N-palmitoyl cysteine moiety is linked to residue C24. Residue C24 is the site of S-diacylglycerol cysteine attachment.

This sequence belongs to the outer membrane factor (OMF) (TC 1.B.17) family. Could be part of a tripartite efflux system composed of MdtN, MdtO and MdtP.

The protein localises to the cell outer membrane. Could be involved in resistance to puromycin, acriflavine and tetraphenylarsonium chloride. This Escherichia coli O157:H7 protein is Multidrug resistance outer membrane protein MdtP (mdtP).